A 467-amino-acid polypeptide reads, in one-letter code: MVQKKTTEMKGFHRSFKGQNPFDAAYEMEARNMESVFNFDCPSRPDVPSSAPIDIPDAKKRTKKKKRCRATDSFTGRFDDMYQLQQEILGEGAYAKVQSCINLITNKEYAVKIIEKRPGHSRSRVFREVEMLYQCQGHSNVLELIEFFEEEDKFYLVFEKMCGGSILNHIHRRRHFNEREASFVVRDIAEALNYLHNKGIAHRDLKPENILCESPHQVSPVKICDFDLGSGIKLNSDCSPISTPELLTPCGSAEYMAPEVVEAFNEEASIYDKRCDLWSLGVILYIMLSGYPPFVGHCGSDCGWDRGEACPACQNMLFVSIQEGKYEFPEKDWAHISYGAKDLISKLLLRDAKKRLSAAQVLQHPWVQGNAPYNTLPTPIILQRNSSAKDLTSFAAEAIAMNRQLMEREEEEEGTENSSLCPFVVKATSCSMQLSPPSESKLAKRRQQGSKGGISPPSLAPLLIVSD.

The Protein kinase domain occupies 83 to 367; it reads QLQQEILGEG…AAQVLQHPWV (285 aa). ATP contacts are provided by residues 89 to 97 and Lys-112; that span reads LGEGAYAKV. Residue Asp-204 is the Proton acceptor of the active site. Residues Cys-298, Cys-310, and Cys-313 each contribute to the Zn(2+) site. The segment at 432 to 467 is disordered; that stretch reads MQLSPPSESKLAKRRQQGSKGGISPPSLAPLLIVSD.

Belongs to the protein kinase superfamily. CAMK Ser/Thr protein kinase family. Requires Mg(2+) as cofactor. The cofactor is Zn(2+).

The catalysed reaction is L-seryl-[protein] + ATP = O-phospho-L-seryl-[protein] + ADP + H(+). The enzyme catalyses L-threonyl-[protein] + ATP = O-phospho-L-threonyl-[protein] + ADP + H(+). Its function is as follows. May play a role in the response to environmental stress and cytokines. Appears to regulate translation by phosphorylating EIF4E, thus increasing the affinity of this protein for the 7-methylguanosine-containing mRNA cap. This is MAP kinase-interacting serine/threonine-protein kinase 2 (mknk2) from Xenopus laevis (African clawed frog).